We begin with the raw amino-acid sequence, 460 residues long: Ribosome biogenesis protein YTM1 (460 aa).

The ubiquitin-like (UBL) domain stretch occupies residues 8-89 (VKIRFFTREK…EASLNVEYTR (82 aa)). The tract at residues 99–460 (SFSNEDWVSS…INKGDNIFKN (362 aa)) is sufficient for interaction with ERB1 and association with 66S pre-ribosomes. WD repeat units follow at residues 101 to 140 (SNED…QKQY), 142 to 180 (GHSG…LKLT), 206 to 244 (GHKA…MTVV), 285 to 325 (SHTA…CIDT), 327 to 366 (TTSY…SSKV), 373 to 413 (GHKN…PMYT), and 424 to 460 (GVND…IFKN).

It belongs to the WD repeat WDR12/YTM1 family. In terms of assembly, component of the NOP7 complex, composed of ERB1, NOP7 and YTM1. The complex is held together by ERB1, which interacts with NOP7 via its N-terminal domain and with YTM1 via a high-affinity interaction between the seven-bladed beta-propeller domains of the 2 proteins. The NOP7 complex associates with the 66S pre-ribosome. Interacts (via UBL domain) with MDN1 (via VWFA/MIDAS domain).

The protein localises to the nucleus. The protein resides in the nucleolus. It localises to the nucleoplasm. Its function is as follows. Component of the NOP7 complex, which is required for maturation of the 25S and 5.8S ribosomal RNAs and formation of the 60S ribosome. This Saccharomyces cerevisiae (strain YJM789) (Baker's yeast) protein is Ribosome biogenesis protein YTM1.